The sequence spans 378 residues: Erythronate-4-phosphate dehydrogenase (378 aa).

Residues S45 and T66 each coordinate substrate. D146 and T175 together coordinate NAD(+). Residue R208 is part of the active site. NAD(+) is bound at residue D232. Residue E237 is part of the active site. H254 serves as the catalytic Proton donor. G257 contributes to the NAD(+) binding site. Position 258 (Y258) interacts with substrate.

This sequence belongs to the D-isomer specific 2-hydroxyacid dehydrogenase family. PdxB subfamily. In terms of assembly, homodimer.

The protein resides in the cytoplasm. It catalyses the reaction 4-phospho-D-erythronate + NAD(+) = (R)-3-hydroxy-2-oxo-4-phosphooxybutanoate + NADH + H(+). It participates in cofactor biosynthesis; pyridoxine 5'-phosphate biosynthesis; pyridoxine 5'-phosphate from D-erythrose 4-phosphate: step 2/5. In terms of biological role, catalyzes the oxidation of erythronate-4-phosphate to 3-hydroxy-2-oxo-4-phosphonooxybutanoate. The chain is Erythronate-4-phosphate dehydrogenase from Cronobacter sakazakii (strain ATCC BAA-894) (Enterobacter sakazakii).